Consider the following 563-residue polypeptide: Envelope glycoprotein (563 aa).

Residues 1–18 (MGFTTKIIFLYNLVLVYA) form the signal peptide. The Extracellular portion of the chain corresponds to 19–503 (GFDDPRKAIE…SNPLWTGLQG (485 aa)). N-linked (GlcNAc...) asparagine; by host glycans are attached at residues Asn-113, Asn-219, and Asn-229. The CXXC signature appears at 236-239 (CWLC). Disulfide bonds link Cys-236–Cys-239, Cys-236–Cys-465, and Cys-457–Cys-464. 7 N-linked (GlcNAc...) asparagine; by host glycosylation sites follow: Asn-264, Asn-282, Asn-292, Asn-306, Asn-312, Asn-321, and Asn-339. The segment at 380 to 400 (FIPLLAGLGITAAFTTGATGL) is fusion peptide. Coiled coils occupy residues 401 to 451 (GVSV…LLTA) and 461 to 497 (QEKC…SNPL). Residues 440–456 (LQNRRGLDLLTAEQGGI) form an immunosuppression region. Positions 457 to 465 (CLALQEKCC) match the CX6CC motif. The N-linked (GlcNAc...) asparagine; by host glycan is linked to Asn-469. The helical transmembrane segment at 504–524 (LLPYLLPFLGPLLTLLLLLTI) threads the bilayer. Residues 525–563 (GPCIFNRLTAFINDKLNIIHAMVLTQQYQVLRTDEEAQD) lie on the Cytoplasmic side of the membrane. Cys-527 is lipidated: S-palmitoyl cysteine; by host. The YXXL motif; contains endocytosis signal signature appears at 552-555 (YQVL).

The mature envelope protein (Env) consists of a trimer of SU-TM heterodimers attached by a labile interchain disulfide bond. In terms of processing, specific enzymatic cleavages in vivo yield mature proteins. Envelope glycoproteins are synthesized as an inactive precursor that is N-glycosylated and processed likely by host cell furin or by a furin-like protease in the Golgi to yield the mature SU and TM proteins. The cleavage site between SU and TM requires the minimal sequence [KR]-X-[KR]-R. The R-peptide is released from the C-terminus of the cytoplasmic tail of the TM protein upon particle formation as a result of proteolytic cleavage by the viral protease. Cleavage of this peptide is required for TM to become fusogenic. The CXXC motif is highly conserved across a broad range of retroviral envelope proteins. It is thought to participate in the formation of a labile disulfide bond possibly with the CX6CC motif present in the transmembrane protein. Isomerization of the intersubunit disulfide bond to an SU intrachain disulfide bond is thought to occur upon receptor recognition in order to allow membrane fusion. Post-translationally, the transmembrane protein is palmitoylated.

It is found in the virion membrane. The protein localises to the host cell membrane. Its function is as follows. The surface protein (SU) attaches the virus to the host cell by binding to its receptor. This interaction triggers the refolding of the transmembrane protein (TM) and is thought to activate its fusogenic potential by unmasking its fusion peptide. Fusion occurs at the host cell plasma membrane. The transmembrane protein (TM) acts as a class I viral fusion protein. Under the current model, the protein has at least 3 conformational states: pre-fusion native state, pre-hairpin intermediate state, and post-fusion hairpin state. During viral and target cell membrane fusion, the coiled coil regions (heptad repeats) assume a trimer-of-hairpins structure, positioning the fusion peptide in close proximity to the C-terminal region of the ectodomain. The formation of this structure appears to drive apposition and subsequent fusion of viral and target cell membranes. Membranes fusion leads to delivery of the nucleocapsid into the cytoplasm. This is Envelope glycoprotein (env) from Baboon endogenous virus (strain M7).